Reading from the N-terminus, the 396-residue chain is Ribosomal RNA large subunit methyltransferase I (396 aa).

Positions 2–81 constitute a PUA domain; that stretch reads SVRLVLAKGR…ESIDIAFFTR (80 aa).

This sequence belongs to the methyltransferase superfamily. RlmI family.

The protein resides in the cytoplasm. It catalyses the reaction cytidine(1962) in 23S rRNA + S-adenosyl-L-methionine = 5-methylcytidine(1962) in 23S rRNA + S-adenosyl-L-homocysteine + H(+). Functionally, specifically methylates the cytosine at position 1962 (m5C1962) of 23S rRNA. This is Ribosomal RNA large subunit methyltransferase I from Escherichia coli O127:H6 (strain E2348/69 / EPEC).